Here is a 401-residue protein sequence, read N- to C-terminus: Argininosuccinate synthase (401 aa).

Alanine 9–serine 17 contacts ATP. Tyrosine 86 contributes to the L-citrulline binding site. Glycine 116 lines the ATP pocket. Residues threonine 118, asparagine 122, and aspartate 123 each coordinate L-aspartate. Position 122 (asparagine 122) interacts with L-citrulline. Residues arginine 126, serine 174, serine 183, glutamate 259, and tyrosine 271 each contribute to the L-citrulline site.

This sequence belongs to the argininosuccinate synthase family. Type 1 subfamily. As to quaternary structure, homotetramer.

It localises to the cytoplasm. The catalysed reaction is L-citrulline + L-aspartate + ATP = 2-(N(omega)-L-arginino)succinate + AMP + diphosphate + H(+). Its pathway is amino-acid biosynthesis; L-arginine biosynthesis; L-arginine from L-ornithine and carbamoyl phosphate: step 2/3. This Bacillus anthracis (strain A0248) protein is Argininosuccinate synthase.